A 479-amino-acid polypeptide reads, in one-letter code: T-box transcription factor TBX1 (479 aa).

2 stretches are compositionally biased toward low complexity: residues 15–31 (ASSL…ADPF) and 59–86 (YPFA…AAAV). Residues 15-86 (ASSLSGLGSP…GPGASRAAAV (72 aa)) are disordered. Residues 108 to 286 (LWDEFNQLGT…SNPFAKGFRD (179 aa)) constitute a DNA-binding region (T-box). The interval 311–398 (RNPVASPTQP…APGASEPLHH (88 aa)) is disordered. Positions 313–322 (PVASPTQPNG) are enriched in polar residues. Residues 323–338 (SDKDAAEARREFDRDS) show a composition bias toward basic and acidic residues. The Nuclear localization signal signature appears at 415 to 426 (KSRPAPYPLPGL).

In terms of assembly, binds DNA as a dimer. Interacts with DSCR6. Interacts with NKX2-5. Expressed in skeletal muscle, lung and testis. Highly expressed in hair follicle stem cell, but not in terminally differentiating cells.

Its subcellular location is the nucleus. Its function is as follows. Transcription factor that plays a key role in cardiovascular development by promoting pharyngeal arch segmentation during embryonic development. Also involved in craniofacial muscle development. Together with NKX2-5, acts as a regulator of asymmetric cardiac morphogenesis by promoting expression of PITX2. Acts upstream of TBX1 for the formation of the thymus and parathyroid glands from the third pharyngeal pouch. Required for hair follicle stem cell self-renewal. Binds to the palindromic T site 5'-TTCACACCTAGGTGTGAA-3' DNA sequence. This Mus musculus (Mouse) protein is T-box transcription factor TBX1.